The sequence spans 267 residues: Regulatory protein RecX (267 aa).

Belongs to the RecX family.

The protein resides in the cytoplasm. Modulates RecA activity. The polypeptide is Regulatory protein RecX (Staphylococcus haemolyticus (strain JCSC1435)).